The sequence spans 304 residues: Porphobilinogen deaminase (304 aa).

Cys-240 carries the post-translational modification S-(dipyrrolylmethanemethyl)cysteine.

The protein belongs to the HMBS family. In terms of assembly, monomer. It depends on dipyrromethane as a cofactor.

The catalysed reaction is 4 porphobilinogen + H2O = hydroxymethylbilane + 4 NH4(+). It functions in the pathway porphyrin-containing compound metabolism; protoporphyrin-IX biosynthesis; coproporphyrinogen-III from 5-aminolevulinate: step 2/4. In terms of biological role, tetrapolymerization of the monopyrrole PBG into the hydroxymethylbilane pre-uroporphyrinogen in several discrete steps. This Xanthomonas axonopodis pv. citri (strain 306) protein is Porphobilinogen deaminase.